A 283-amino-acid polypeptide reads, in one-letter code: Phosphatidylserine decarboxylase proenzyme (283 aa).

Catalysis depends on charge relay system; for autoendoproteolytic cleavage activity residues aspartate 89, histidine 146, and serine 249. The active-site Schiff-base intermediate with substrate; via pyruvic acid; for decarboxylase activity is the serine 249. Serine 249 carries the post-translational modification Pyruvic acid (Ser); by autocatalysis.

The protein belongs to the phosphatidylserine decarboxylase family. PSD-B subfamily. Prokaryotic type I sub-subfamily. As to quaternary structure, heterodimer of a large membrane-associated beta subunit and a small pyruvoyl-containing alpha subunit. It depends on pyruvate as a cofactor. In terms of processing, is synthesized initially as an inactive proenzyme. Formation of the active enzyme involves a self-maturation process in which the active site pyruvoyl group is generated from an internal serine residue via an autocatalytic post-translational modification. Two non-identical subunits are generated from the proenzyme in this reaction, and the pyruvate is formed at the N-terminus of the alpha chain, which is derived from the carboxyl end of the proenzyme. The autoendoproteolytic cleavage occurs by a canonical serine protease mechanism, in which the side chain hydroxyl group of the serine supplies its oxygen atom to form the C-terminus of the beta chain, while the remainder of the serine residue undergoes an oxidative deamination to produce ammonia and the pyruvoyl prosthetic group on the alpha chain. During this reaction, the Ser that is part of the protease active site of the proenzyme becomes the pyruvoyl prosthetic group, which constitutes an essential element of the active site of the mature decarboxylase.

It localises to the cell membrane. The catalysed reaction is a 1,2-diacyl-sn-glycero-3-phospho-L-serine + H(+) = a 1,2-diacyl-sn-glycero-3-phosphoethanolamine + CO2. The protein operates within phospholipid metabolism; phosphatidylethanolamine biosynthesis; phosphatidylethanolamine from CDP-diacylglycerol: step 2/2. Catalyzes the formation of phosphatidylethanolamine (PtdEtn) from phosphatidylserine (PtdSer). The chain is Phosphatidylserine decarboxylase proenzyme from Legionella pneumophila (strain Lens).